A 116-amino-acid chain; its full sequence is MSVESFTPTALQFTQGAAHKVKSLVDEEGNDRLKLRVFVTGGGCSGFQYGFTFDEDVAEDDTIVEREGVSLVVDPMSFQYLAGAEVDYQEGLEGSRFVIKNPNATTTCGCGSSFSI.

Iron-sulfur cluster is bound by residues C44, C108, and C110.

The protein belongs to the HesB/IscA family. Homodimer. Requires iron-sulfur cluster as cofactor.

Its function is as follows. Required for insertion of 4Fe-4S clusters for at least IspG. This is Iron-sulfur cluster insertion protein ErpA from Pseudomonas fluorescens (strain Pf0-1).